We begin with the raw amino-acid sequence, 342 residues long: tRNA-specific 2-thiouridylase MnmA 2 (342 aa).

Cys62 serves as the catalytic Nucleophile. Residues Cys62 and Cys160 are joined by a disulfide bond. ATP is bound at residue Gly86. Residues 110–112 are interaction with tRNA; that stretch reads KDQ. The active-site Cysteine persulfide intermediate is Cys160. An interaction with tRNA region spans residues 268 to 269; the sequence is RY.

It belongs to the MnmA/TRMU family.

The protein resides in the cytoplasm. The enzyme catalyses S-sulfanyl-L-cysteinyl-[protein] + uridine(34) in tRNA + AH2 + ATP = 2-thiouridine(34) in tRNA + L-cysteinyl-[protein] + A + AMP + diphosphate + H(+). Functionally, catalyzes the 2-thiolation of uridine at the wobble position (U34) of tRNA, leading to the formation of s(2)U34. The sequence is that of tRNA-specific 2-thiouridylase MnmA 2 from Syntrophus aciditrophicus (strain SB).